A 194-amino-acid polypeptide reads, in one-letter code: NADH-quinone oxidoreductase subunit B (194 aa).

[4Fe-4S] cluster is bound by residues cysteine 73, cysteine 74, cysteine 138, and cysteine 168.

It belongs to the complex I 20 kDa subunit family. As to quaternary structure, NDH-1 is composed of 14 different subunits. Subunits NuoB, C, D, E, F, and G constitute the peripheral sector of the complex. Requires [4Fe-4S] cluster as cofactor.

Its subcellular location is the cell inner membrane. The enzyme catalyses a quinone + NADH + 5 H(+)(in) = a quinol + NAD(+) + 4 H(+)(out). Its function is as follows. NDH-1 shuttles electrons from NADH, via FMN and iron-sulfur (Fe-S) centers, to quinones in the respiratory chain. The immediate electron acceptor for the enzyme in this species is believed to be ubiquinone. Couples the redox reaction to proton translocation (for every two electrons transferred, four hydrogen ions are translocated across the cytoplasmic membrane), and thus conserves the redox energy in a proton gradient. This is NADH-quinone oxidoreductase subunit B from Rhizobium johnstonii (strain DSM 114642 / LMG 32736 / 3841) (Rhizobium leguminosarum bv. viciae).